The sequence spans 531 residues: Zinc finger C2HC domain-containing protein 1C (531 aa).

The segment at 16–45 is disordered; the sequence is MLPHNTTEAPGPHSAKQDSYEQSDSSQQSL. Positions 35–44 are enriched in low complexity; that stretch reads YEQSDSSQQS. Positions 209-264 form a coiled coil; sequence VQIRRLEAAGESLEEEIRRKQILLRGKLKKTEEELRRIQTQKEQAKENENRELQKI. Disordered stretches follow at residues 290–318 and 334–387; these read FEEE…QLSD and NKIR…PQLG. The span at 293–305 shows a compositional bias: basic and acidic residues; it reads EFSRDKREDETWE. Residues 306–315 show a composition bias toward polar residues; sequence RSQQNSSPFQ. Positions 335–345 are enriched in basic and acidic residues; the sequence is KIRDRVSEPSM. Over residues 366–380 the composition is skewed to low complexity; sequence SSLSMAPDSSGSSGS. 2 C2HC/C3H-type zinc fingers span residues 385 to 414 and 493 to 522; these read QLGE…MQGS and DYIQ…IKNR. Zn(2+) contacts are provided by Cys-389, Cys-392, His-404, Cys-408, Cys-497, Cys-500, His-512, and Cys-516.

This sequence belongs to the ZC2HC1 family. Zn(2+) serves as cofactor.

This is Zinc finger C2HC domain-containing protein 1C (ZC2HC1C) from Macaca fascicularis (Crab-eating macaque).